Here is an 848-residue protein sequence, read N- to C-terminus: Neprilysin-11 (848 aa).

Residues methionine 1 to lysine 74 lie on the Cytoplasmic side of the membrane. Residues leucine 75–isoleucine 95 form a helical; Signal-anchor for type II membrane protein membrane-spanning segment. The Extracellular portion of the chain corresponds to asparagine 96–tryptophan 848. The disordered stretch occupies residues histidine 108–cysteine 161. Residues valine 133–proline 144 are compositionally biased toward pro residues. The 689-residue stretch at valine 160–tryptophan 848 folds into the Peptidase M13 domain. A disulfide bridge links cysteine 161 with cysteine 166. N-linked (GlcNAc...) asparagine glycosylation is found at asparagine 178, asparagine 249, asparagine 284, asparagine 312, asparagine 337, asparagine 364, asparagine 398, and asparagine 438. Disulfide bonds link cysteine 184/cysteine 833, cysteine 192/cysteine 793, cysteine 247/cysteine 509, and cysteine 719/cysteine 845. Histidine 682 contacts Zn(2+). Glutamate 683 is a catalytic residue. Histidine 686 provides a ligand contact to Zn(2+). N-linked (GlcNAc...) asparagine glycosylation is present at asparagine 726. Glutamate 744 serves as a coordination point for Zn(2+). The Proton donor role is filled by aspartate 748.

The protein belongs to the peptidase M13 family. Zn(2+) serves as cofactor.

It localises to the cell membrane. Functionally, probable cell surface protease. This Caenorhabditis elegans protein is Neprilysin-11 (nep-11).